The primary structure comprises 286 residues: 2-hydroxy-6-oxo-6-phenylhexa-2,4-dienoate hydrolase (286 aa).

Positions V36–H271 constitute an AB hydrolase-1 domain. Residues G42–G43, N51, N111, S180, and R190 contribute to the substrate site. H265 acts as the Proton acceptor in catalysis. Substrate is bound at residue W266.

This sequence belongs to the AB hydrolase superfamily. BphD family. In terms of assembly, homodimer.

The enzyme catalyses 2,6-dioxo-6-phenylhexa-3-enoate + H2O = 2-oxopent-4-enoate + benzoate + H(+). The protein operates within xenobiotic degradation; biphenyl degradation; 2-hydroxy-2,4-pentadienoate and benzoate from biphenyl: step 4/4. Functionally, catalyzes an unusual C-C bond hydrolysis of 2-hydroxy-6-oxo-6-phenylhexa-2,4-dienoic acid (HOPDA) to produce benzoic acid and 2-hydroxy-2,4-pentadienoic acid (HPD). The sequence is that of 2-hydroxy-6-oxo-6-phenylhexa-2,4-dienoate hydrolase (bphD) from Metapseudomonas furukawaii (Pseudomonas furukawaii).